Here is a 260-residue protein sequence, read N- to C-terminus: ARL14 effector protein (260 aa).

Met1 is subject to N-acetylmethionine. Residue Lys177 forms a Glycyl lysine isopeptide (Lys-Gly) (interchain with G-Cter in SUMO2) linkage. Ser183 is modified (phosphoserine).

As to quaternary structure, interacts with ARL14 and MYO1E.

Its subcellular location is the cytoplasm. Its function is as follows. Through its interaction with ARL14 and MYO1E, may connect MHC class II-containing cytoplasmic vesicles to the actin network and hence controls the movement of these vesicles along the actin cytoskeleton in dendritic cells. The sequence is that of ARL14 effector protein (ARL14EP) from Bos taurus (Bovine).